The primary structure comprises 340 residues: Glycerol-3-phosphate dehydrogenase [NAD(P)+] (340 aa).

NADPH-binding residues include Ser13, Tyr14, and Lys108. 3 residues coordinate sn-glycerol 3-phosphate: Lys108, Gly137, and Thr139. An NADPH-binding site is contributed by Ala141. Lys193, Asp246, Ser256, Arg257, and Asn258 together coordinate sn-glycerol 3-phosphate. The active-site Proton acceptor is the Lys193. Residue Arg257 coordinates NADPH. NADPH is bound by residues Ile281 and Glu283.

It belongs to the NAD-dependent glycerol-3-phosphate dehydrogenase family.

It is found in the cytoplasm. It catalyses the reaction sn-glycerol 3-phosphate + NAD(+) = dihydroxyacetone phosphate + NADH + H(+). It carries out the reaction sn-glycerol 3-phosphate + NADP(+) = dihydroxyacetone phosphate + NADPH + H(+). The protein operates within membrane lipid metabolism; glycerophospholipid metabolism. Its function is as follows. Catalyzes the reduction of the glycolytic intermediate dihydroxyacetone phosphate (DHAP) to sn-glycerol 3-phosphate (G3P), the key precursor for phospholipid synthesis. This chain is Glycerol-3-phosphate dehydrogenase [NAD(P)+], found in Bartonella quintana (strain Toulouse) (Rochalimaea quintana).